The primary structure comprises 283 residues: 4-diphosphocytidyl-2-C-methyl-D-erythritol kinase (283 aa).

Residue K12 is part of the active site. 99–109 contributes to the ATP binding site; sequence PLAAGIGGGSA. The active site involves D141.

The protein belongs to the GHMP kinase family. IspE subfamily.

The catalysed reaction is 4-CDP-2-C-methyl-D-erythritol + ATP = 4-CDP-2-C-methyl-D-erythritol 2-phosphate + ADP + H(+). It participates in isoprenoid biosynthesis; isopentenyl diphosphate biosynthesis via DXP pathway; isopentenyl diphosphate from 1-deoxy-D-xylulose 5-phosphate: step 3/6. In terms of biological role, catalyzes the phosphorylation of the position 2 hydroxy group of 4-diphosphocytidyl-2C-methyl-D-erythritol. This Sphingopyxis alaskensis (strain DSM 13593 / LMG 18877 / RB2256) (Sphingomonas alaskensis) protein is 4-diphosphocytidyl-2-C-methyl-D-erythritol kinase.